A 59-amino-acid polypeptide reads, in one-letter code: Photosystem II reaction center protein K (59 aa).

A propeptide spanning residues 1–22 (MLNIFSLICLNSALHSSSFFFA) is cleaved from the precursor. Residues 38-58 (MPVIPVLFFLLALVWQAAVSF) form a helical membrane-spanning segment.

It belongs to the PsbK family. As to quaternary structure, PSII is composed of 1 copy each of membrane proteins PsbA, PsbB, PsbC, PsbD, PsbE, PsbF, PsbH, PsbI, PsbJ, PsbK, PsbL, PsbM, PsbT, PsbX, PsbY, PsbZ, Psb30/Ycf12, at least 3 peripheral proteins of the oxygen-evolving complex and a large number of cofactors. It forms dimeric complexes.

Its subcellular location is the plastid. The protein localises to the chloroplast thylakoid membrane. One of the components of the core complex of photosystem II (PSII). PSII is a light-driven water:plastoquinone oxidoreductase that uses light energy to abstract electrons from H(2)O, generating O(2) and a proton gradient subsequently used for ATP formation. It consists of a core antenna complex that captures photons, and an electron transfer chain that converts photonic excitation into a charge separation. The protein is Photosystem II reaction center protein K of Calycanthus floridus var. glaucus (Eastern sweetshrub).